The primary structure comprises 159 residues: Endoribonuclease YbeY (159 aa).

Zn(2+)-binding residues include His123, His127, and His133.

It belongs to the endoribonuclease YbeY family. Zn(2+) serves as cofactor.

The protein localises to the cytoplasm. Its function is as follows. Single strand-specific metallo-endoribonuclease involved in late-stage 70S ribosome quality control and in maturation of the 3' terminus of the 16S rRNA. This is Endoribonuclease YbeY from Bacillus pumilus (strain SAFR-032).